A 122-amino-acid polypeptide reads, in one-letter code: Glycine cleavage system H protein (122 aa).

The Lipoyl-binding domain maps to 19–101 (VVTVGITNYA…EKEGWLWKMT (83 aa)). Lys60 is modified (N6-lipoyllysine).

It belongs to the GcvH family. As to quaternary structure, the glycine cleavage system is composed of four proteins: P, T, L and H. (R)-lipoate is required as a cofactor.

Functionally, the glycine cleavage system catalyzes the degradation of glycine. The H protein shuttles the methylamine group of glycine from the P protein to the T protein. This chain is Glycine cleavage system H protein, found in Bartonella quintana (strain Toulouse) (Rochalimaea quintana).